The primary structure comprises 104 residues: Protein SMALL AUXIN UP-REGULATED RNA 12 (104 aa).

It belongs to the ARG7 family. As to expression, expressed in flowers and etiolated hypocotyls.

The protein resides in the cell membrane. Its function is as follows. Provide a mechanistic link between auxin and plasma membrane H(+)-ATPases (PM H(+)-ATPases, e.g. AHA1 and AHA2), and triggers PM H(+)-ATPases activity by promoting phosphorylation of their C-terminal autoinhibitory domain as a result of PP2C-D subfamily of type 2C phosphatases inhibition, thus leading to the acidification of the apoplast and the facilitation of solutes and water uptake to drive cell expansion. Triggers plant growth probably by promoting cell elongation. Regulates branch angles and bending. In Arabidopsis thaliana (Mouse-ear cress), this protein is Protein SMALL AUXIN UP-REGULATED RNA 12.